Here is a 131-residue protein sequence, read N- to C-terminus: Large ribosomal subunit protein bL21 (131 aa).

It belongs to the bacterial ribosomal protein bL21 family. Part of the 50S ribosomal subunit. Contacts protein L20.

This protein binds to 23S rRNA in the presence of protein L20. The chain is Large ribosomal subunit protein bL21 from Cereibacter sphaeroides (strain ATCC 17023 / DSM 158 / JCM 6121 / CCUG 31486 / LMG 2827 / NBRC 12203 / NCIMB 8253 / ATH 2.4.1.) (Rhodobacter sphaeroides).